Consider the following 434-residue polypeptide: Histidinol dehydrogenase (434 aa).

3 residues coordinate NAD(+): Tyr-130, Gln-188, and Asn-211. The substrate site is built by Ser-237, Gln-259, and His-262. Positions 259 and 262 each coordinate Zn(2+). Catalysis depends on proton acceptor residues Glu-326 and His-327. Substrate is bound by residues His-327, Asp-360, Glu-414, and His-419. Residue Asp-360 participates in Zn(2+) binding. His-419 contributes to the Zn(2+) binding site.

Belongs to the histidinol dehydrogenase family. In terms of assembly, homodimer. Zn(2+) serves as cofactor.

It carries out the reaction L-histidinol + 2 NAD(+) + H2O = L-histidine + 2 NADH + 3 H(+). It participates in amino-acid biosynthesis; L-histidine biosynthesis; L-histidine from 5-phospho-alpha-D-ribose 1-diphosphate: step 9/9. Functionally, catalyzes the sequential NAD-dependent oxidations of L-histidinol to L-histidinaldehyde and then to L-histidine. This chain is Histidinol dehydrogenase, found in Salmonella paratyphi A (strain ATCC 9150 / SARB42).